The chain runs to 335 residues: Methylthioribose-1-phosphate isomerase (335 aa).

Residues 47-49 (RGA), R81, and Q184 each bind substrate. D225 serves as the catalytic Proton donor. Residue 235–236 (NK) coordinates substrate.

Belongs to the eIF-2B alpha/beta/delta subunits family. MtnA subfamily.

It carries out the reaction 5-(methylsulfanyl)-alpha-D-ribose 1-phosphate = 5-(methylsulfanyl)-D-ribulose 1-phosphate. Its pathway is amino-acid biosynthesis; L-methionine biosynthesis via salvage pathway; L-methionine from S-methyl-5-thio-alpha-D-ribose 1-phosphate: step 1/6. Its function is as follows. Catalyzes the interconversion of methylthioribose-1-phosphate (MTR-1-P) into methylthioribulose-1-phosphate (MTRu-1-P). The polypeptide is Methylthioribose-1-phosphate isomerase (Synechococcus sp. (strain CC9902)).